Here is a 244-residue protein sequence, read N- to C-terminus: Protein IN2-1 homolog B (244 aa).

A disordered region spans residues M1–P27. One can recognise a GST N-terminal domain in the interval G32–A113. Glutathione-binding positions include V85 and E97–S98. Residues D118–L241 enclose the GST C-terminal domain.

The polypeptide is Protein IN2-1 homolog B (GSTZ5) (Oryza sativa subsp. indica (Rice)).